A 343-amino-acid polypeptide reads, in one-letter code: Probable long-chain-alcohol O-fatty-acyltransferase 2 (343 aa).

A run of 8 helical transmembrane segments spans residues 7–27 (NLIKVWISALISISYCYYISS), 36–56 (LLSLLPIFIIFLLLPLFFSSV), 58–78 (FCVISGFFFTWLANFKLFLFA), 117–137 (PMSKWVLAFKLLIFSFLLHVY), 148–168 (FAFLALFTIHVYLEAELILVF), 235–255 (GMLATFIVSGLMHELIYFYVI), 260–280 (TWEVTCFFLLHGVVTCLEIAM), and 292–312 (AVSGLAITVFLLVTAGWLFYP).

This sequence belongs to the wax synthase family.

It localises to the membrane. It catalyses the reaction a long chain fatty alcohol + a fatty acyl-CoA = a wax ester + CoA. In terms of biological role, catalyzes the final step in the synthesis of long-chain linear esters (waxes). This Arabidopsis thaliana (Mouse-ear cress) protein is Probable long-chain-alcohol O-fatty-acyltransferase 2 (AT2).